The chain runs to 1237 residues: GTPase activating protein BUD2 (1237 aa).

A compositionally biased stretch (low complexity) spans 79 to 110 (GSGKSSISQPPPTTSTRRNLLRKSSNLNSSDQ). The segment at 79–124 (GSGKSSISQPPPTTSTRRNLLRKSSNLNSSDQSHSKSSEDNEHQPP) is disordered. Residues 111–121 (SHSKSSEDNEH) are compositionally biased toward basic and acidic residues. The C2 domain occupies 381 to 503 (NVEHPQLYDF…KQIKTTSTIM (123 aa)). One can recognise a Ras-GAP domain in the interval 637–905 (NSQDQAVSNS…PEIYDYFDKL (269 aa)). Disordered regions lie at residues 721-762 (SIHE…ERER) and 969-1007 (NNNGSMSNLGTPVNSPSRDMEREQDRSRSRSQSGTPDLD). Residues 735–754 (DVSDDDDDDDDNSSDDDADY) show a composition bias toward acidic residues. Positions 986–996 (RDMEREQDRSR) are enriched in basic and acidic residues. Positions 1065-1093 (NITLKDIQKQSTKIMNKIQELEIYLENYE) form a coiled coil. Residues 1170-1204 (NGGMGNRNGHDVNGHNNNNNNNNNNTGDGYNETDR) are disordered. A compositionally biased stretch (low complexity) spans 1183–1199 (GHNNNNNNNNNNTGDGY).

The protein resides in the cytoplasm. The protein localises to the cell cortex. It localises to the cell tip. It is found in the cell septum. GTPase activating protein (GAP) for RSR1 which is involved in the polarization of yeast and hyphal cells. Directs the site of new daughter cell growth in yeast and hyphal cells. Important for hyphae to maintain linear growth and necessary for hyphal responses to directional cues in the environment (tropisms). Required for correct localization of the septin rings and stabilization of the polarisome at hyphal tips. Involved in cell adhesion. This chain is GTPase activating protein BUD2 (BUD2), found in Candida albicans (strain SC5314 / ATCC MYA-2876) (Yeast).